The chain runs to 335 residues: MNPLDLIAKRAYPYETEKRDKTYLALNENPFPFPEDLVDEVFRRLNSDALRIYYDSPDEELIEKILSYLDTDFLSKNNVSVGNGADEIIYVMMLMFDRSVFFPPTYSCYRIFAKAVGAKFLEVPLTKDLRIPEVNVGEGDVVFIPNPNNPTGHVFEREEIERILKTGAFVALDEAYYEFHGESYVDFLKKYENLAVIRTFSKAFSLAAQRVGYVVASEKFIDAYNRVRLPFNVSYVSQMFAKVALDHREIFEERTKFIVEERERMKSALREMGYRITDSRGNFVFVFMEKEEKERLLEHLRTKNVAVRSFREGVRITIGKREENDMILRELEVFK.

N6-(pyridoxal phosphate)lysine is present on lysine 202.

Belongs to the class-II pyridoxal-phosphate-dependent aminotransferase family. Histidinol-phosphate aminotransferase subfamily. As to quaternary structure, homodimer. Pyridoxal 5'-phosphate serves as cofactor.

It catalyses the reaction L-histidinol phosphate + 2-oxoglutarate = 3-(imidazol-4-yl)-2-oxopropyl phosphate + L-glutamate. It participates in amino-acid biosynthesis; L-histidine biosynthesis; L-histidine from 5-phospho-alpha-D-ribose 1-diphosphate: step 7/9. The chain is Histidinol-phosphate aminotransferase from Thermotoga maritima (strain ATCC 43589 / DSM 3109 / JCM 10099 / NBRC 100826 / MSB8).